We begin with the raw amino-acid sequence, 142 residues long: Large ribosomal subunit protein bL21 (142 aa).

The span at 74-84 (RRRQNSKRTRG) shows a compositional bias: basic residues. Residues 74–142 (RRRQNSKRTR…KAATKAESAE (69 aa)) form a disordered region. A compositionally biased stretch (basic and acidic residues) spans 107-125 (KAAEKKAPKADAAEGEAAK). A compositionally biased stretch (basic residues) spans 126–135 (PKKAAPKKAA).

The protein belongs to the bacterial ribosomal protein bL21 family. In terms of assembly, part of the 50S ribosomal subunit. Contacts protein L20.

This protein binds to 23S rRNA in the presence of protein L20. This chain is Large ribosomal subunit protein bL21, found in Brucella abortus (strain S19).